The following is a 144-amino-acid chain: MKPRHKRALMIVAALAVIGIAALLILNALNSNIALYVTPSDVVAGKAPQGQAFRIGGLVKEGSLKRDGLTVHFVITDLVKDIPVSYTGILPDLFKEGKGAVIQGNLNPQGEFIASEVLAKHDENYMPPEAKHALEQAQKNGSAK.

The Cytoplasmic segment spans residues methionine 1–arginine 7. A helical; Signal-anchor for type II membrane protein transmembrane segment spans residues alanine 8–alanine 28. Residues leucine 29–lysine 144 lie on the Extracellular side of the membrane. Residues histidine 121 and tyrosine 125 each coordinate heme.

It belongs to the CcmE/CycJ family.

Its subcellular location is the cell membrane. Its function is as follows. Heme chaperone required for the biogenesis of c-type cytochromes. Transiently binds heme delivered by CcmC and transfers the heme to apo-cytochromes in a process facilitated by CcmF and CcmH. The chain is Cytochrome c-type biogenesis protein CcmE from Polynucleobacter asymbioticus (strain DSM 18221 / CIP 109841 / QLW-P1DMWA-1) (Polynucleobacter necessarius subsp. asymbioticus).